A 455-amino-acid chain; its full sequence is Probable transcription factor GLK1 (455 aa).

Residues 145–163 show a composition bias toward low complexity; it reads AAVEAKSSSPSSTTSSSQE. Residues 145 to 183 are disordered; that stretch reads AAVEAKSSSPSSTTSSSQEAESRHKSSSKSSHGKKKAKV. Over residues 169–181 the composition is skewed to basic residues; sequence KSSSKSSHGKKKA. Residues 177–236 form the HTH myb-type domain; it reads GKKKAKVDWTPELHRRFVQAVEQLGIDKAVPSRILEIMGIDSLTRHNIASHLQKYRSHRK. Residues 207 to 232 constitute a DNA-binding region (H-T-H motif); that stretch reads PSRILEIMGIDSLTRHNIASHLQKYR.

Expressed in leaves.

The protein resides in the nucleus. Probable transcriptional activator that promotes chloroplast development. Acts as an activator of nuclear photosynthetic genes involved in chlorophyll biosynthesis, light harvesting, and electron transport. This Oryza sativa subsp. japonica (Rice) protein is Probable transcription factor GLK1 (GLK1).